Here is a 130-residue protein sequence, read N- to C-terminus: Neelaredoxin (130 aa).

Glu15, His17, His45, His51, Cys115, and His118 together coordinate Fe cation.

It belongs to the desulfoferrodoxin family. Monomer. Requires Fe cation as cofactor.

The catalysed reaction is 2 superoxide + 2 H(+) = H2O2 + O2. Non-heme iron protein. This Megalodesulfovibrio gigas (Desulfovibrio gigas) protein is Neelaredoxin (nlr).